The following is a 273-amino-acid chain: Urease accessory protein UreD (273 aa).

Belongs to the UreD family. UreD, UreF and UreG form a complex that acts as a GTP-hydrolysis-dependent molecular chaperone, activating the urease apoprotein by helping to assemble the nickel containing metallocenter of UreC. The UreE protein probably delivers the nickel.

Its subcellular location is the cytoplasm. In terms of biological role, required for maturation of urease via the functional incorporation of the urease nickel metallocenter. This is Urease accessory protein UreD from Rhizobium leguminosarum bv. trifolii (strain WSM2304).